A 341-amino-acid polypeptide reads, in one-letter code: Anthranilate phosphoribosyltransferase (341 aa).

5-phospho-alpha-D-ribose 1-diphosphate is bound by residues G79, 82 to 83, T87, 89 to 92, 107 to 115, and S119; these read GD, NIST, and KHGGRSVSS. Residue G79 participates in anthranilate binding. S91 lines the Mg(2+) pocket. R165 lines the anthranilate pocket. The Mg(2+) site is built by D224 and E225.

This sequence belongs to the anthranilate phosphoribosyltransferase family. Homodimer. Mg(2+) is required as a cofactor.

It carries out the reaction N-(5-phospho-beta-D-ribosyl)anthranilate + diphosphate = 5-phospho-alpha-D-ribose 1-diphosphate + anthranilate. It functions in the pathway amino-acid biosynthesis; L-tryptophan biosynthesis; L-tryptophan from chorismate: step 2/5. In terms of biological role, catalyzes the transfer of the phosphoribosyl group of 5-phosphorylribose-1-pyrophosphate (PRPP) to anthranilate to yield N-(5'-phosphoribosyl)-anthranilate (PRA). The sequence is that of Anthranilate phosphoribosyltransferase from Ruminiclostridium cellulolyticum (strain ATCC 35319 / DSM 5812 / JCM 6584 / H10) (Clostridium cellulolyticum).